The sequence spans 229 residues: Large ribosomal subunit protein uL1 (229 aa).

It belongs to the universal ribosomal protein uL1 family. As to quaternary structure, part of the 50S ribosomal subunit.

Its function is as follows. Binds directly to 23S rRNA. The L1 stalk is quite mobile in the ribosome, and is involved in E site tRNA release. In terms of biological role, protein L1 is also a translational repressor protein, it controls the translation of the L11 operon by binding to its mRNA. The polypeptide is Large ribosomal subunit protein uL1 (Rhodopseudomonas palustris (strain BisB5)).